A 275-amino-acid chain; its full sequence is UPF0758 protein RL2068 (275 aa).

The disordered stretch occupies residues 1–45 (MAKGPVSTSSDDELPFETQEPIAADERSFFGGQPQKPSAPNARAA). The region spanning 153–275 (VLSSWSSVIQ…HVSLKGLKLI (123 aa)) is the MPN domain. Residues H224, H226, and D237 each contribute to the Zn(2+) site. A JAMM motif motif is present at residues 224 to 237 (HNHPSGDPTPSRAD).

It belongs to the UPF0758 family.

This chain is UPF0758 protein RL2068, found in Rhizobium johnstonii (strain DSM 114642 / LMG 32736 / 3841) (Rhizobium leguminosarum bv. viciae).